A 739-amino-acid polypeptide reads, in one-letter code: Phosphoribosylformylglycinamidine synthase subunit PurL (739 aa).

H53 is an active-site residue. 2 residues coordinate ATP: Y56 and K95. E97 lines the Mg(2+) pocket. Residues 98–101 and R120 contribute to the substrate site; that span reads SHNH. Residue H99 is the Proton acceptor of the active site. Residue D121 coordinates Mg(2+). Residue Q244 participates in substrate binding. Residue D274 participates in Mg(2+) binding. 318-320 contacts substrate; sequence ESQ. ATP-binding residues include D501 and G538. N539 serves as a coordination point for Mg(2+). Position 541 (S541) interacts with substrate.

It belongs to the FGAMS family. In terms of assembly, monomer. Part of the FGAM synthase complex composed of 1 PurL, 1 PurQ and 2 PurS subunits.

It localises to the cytoplasm. The enzyme catalyses N(2)-formyl-N(1)-(5-phospho-beta-D-ribosyl)glycinamide + L-glutamine + ATP + H2O = 2-formamido-N(1)-(5-O-phospho-beta-D-ribosyl)acetamidine + L-glutamate + ADP + phosphate + H(+). Its pathway is purine metabolism; IMP biosynthesis via de novo pathway; 5-amino-1-(5-phospho-D-ribosyl)imidazole from N(2)-formyl-N(1)-(5-phospho-D-ribosyl)glycinamide: step 1/2. In terms of biological role, part of the phosphoribosylformylglycinamidine synthase complex involved in the purines biosynthetic pathway. Catalyzes the ATP-dependent conversion of formylglycinamide ribonucleotide (FGAR) and glutamine to yield formylglycinamidine ribonucleotide (FGAM) and glutamate. The FGAM synthase complex is composed of three subunits. PurQ produces an ammonia molecule by converting glutamine to glutamate. PurL transfers the ammonia molecule to FGAR to form FGAM in an ATP-dependent manner. PurS interacts with PurQ and PurL and is thought to assist in the transfer of the ammonia molecule from PurQ to PurL. In Listeria welshimeri serovar 6b (strain ATCC 35897 / DSM 20650 / CCUG 15529 / CIP 8149 / NCTC 11857 / SLCC 5334 / V8), this protein is Phosphoribosylformylglycinamidine synthase subunit PurL.